A 649-amino-acid polypeptide reads, in one-letter code: Acetyl-coenzyme A synthetase (649 aa).

CoA-binding positions include 191–194 (RGGR), threonine 311, and asparagine 335. ATP is bound by residues 387–389 (GEP), 411–416 (DTWWQT), aspartate 500, and arginine 515. Serine 523 provides a ligand contact to CoA. Position 526 (arginine 526) interacts with ATP. Mg(2+)-binding residues include valine 537, phenylalanine 539, and isoleucine 542. Arginine 584 contacts CoA. Lysine 609 bears the N6-acetyllysine mark.

It belongs to the ATP-dependent AMP-binding enzyme family. It depends on Mg(2+) as a cofactor. Acetylated. Deacetylation by the SIR2-homolog deacetylase activates the enzyme.

The catalysed reaction is acetate + ATP + CoA = acetyl-CoA + AMP + diphosphate. Functionally, catalyzes the conversion of acetate into acetyl-CoA (AcCoA), an essential intermediate at the junction of anabolic and catabolic pathways. AcsA undergoes a two-step reaction. In the first half reaction, AcsA combines acetate with ATP to form acetyl-adenylate (AcAMP) intermediate. In the second half reaction, it can then transfer the acetyl group from AcAMP to the sulfhydryl group of CoA, forming the product AcCoA. The polypeptide is Acetyl-coenzyme A synthetase (Vibrio cholerae serotype O1 (strain ATCC 39315 / El Tor Inaba N16961)).